The sequence spans 156 residues: Small ribosomal subunit protein uS7c (156 aa).

The protein belongs to the universal ribosomal protein uS7 family. In terms of assembly, part of the 30S ribosomal subunit.

Its subcellular location is the plastid. It localises to the chloroplast. Its function is as follows. One of the primary rRNA binding proteins, it binds directly to 16S rRNA where it nucleates assembly of the head domain of the 30S subunit. This Pyropia yezoensis (Susabi-nori) protein is Small ribosomal subunit protein uS7c (rps7).